Here is a 466-residue protein sequence, read N- to C-terminus: 23S rRNA (uracil(1939)-C(5))-methyltransferase RlmD (466 aa).

The TRAM domain occupies 11-69; that stretch reads KITDTKHKEIVINRLDHLGAGIGHLNNKSIFVDGLLPGEKALVQITDDKKQYARAKVIK. 4 residues coordinate [4Fe-4S] cluster: C82, C88, C91, and C184. Residues Q287, F316, N321, E337, N364, and D385 each coordinate S-adenosyl-L-methionine. The active-site Nucleophile is C411.

This sequence belongs to the class I-like SAM-binding methyltransferase superfamily. RNA M5U methyltransferase family. RlmD subfamily.

It catalyses the reaction uridine(1939) in 23S rRNA + S-adenosyl-L-methionine = 5-methyluridine(1939) in 23S rRNA + S-adenosyl-L-homocysteine + H(+). Functionally, catalyzes the formation of 5-methyl-uridine at position 1939 (m5U1939) in 23S rRNA. This Photobacterium profundum (strain SS9) protein is 23S rRNA (uracil(1939)-C(5))-methyltransferase RlmD.